The primary structure comprises 277 residues: MADPWQECMDYAVTLARQAGEIVREALKNEMNIMIKSSPADLVTATDEKVEKMLISSIKEKYPSHSFIGEESVAAGEKSVLTDNPTWIIDPIDGTTNFVHGFPFVAVSIGFVVNKGMEFGVVYSCMEDKMYTGRKGRGAFCDGQKLQVSPQKDVTNSLLVTELGSSRTPETVRIILSNMERLLCIPIHGIRGVGTAALNMCFVAAGVADAFYEMGIHCWDMAGAGIIVTEAGGVLMDITGGPFDLMSRRVIASSNKALGERIAKEIQIIPLQRDDED.

Glutamate 70, aspartate 90, isoleucine 92, and aspartate 93 together coordinate Mg(2+). Glutamate 70 serves as a coordination point for substrate. Isoleucine 92–threonine 95 lines the substrate pocket. Position 168 is a phosphothreonine (threonine 168). Residues glycine 194–alanine 196, glutamate 213, and aspartate 220 contribute to the substrate site. Mg(2+) is bound at residue aspartate 220.

Belongs to the inositol monophosphatase superfamily. As to quaternary structure, homodimer. Mg(2+) is required as a cofactor.

The protein localises to the cytoplasm. The enzyme catalyses a myo-inositol phosphate + H2O = myo-inositol + phosphate. It catalyses the reaction 1D-myo-inositol 1-phosphate + H2O = myo-inositol + phosphate. It carries out the reaction 1D-myo-inositol 2-phosphate + H2O = myo-inositol + phosphate. The catalysed reaction is 1D-myo-inositol 3-phosphate + H2O = myo-inositol + phosphate. The enzyme catalyses 1D-myo-inositol 4-phosphate + H2O = myo-inositol + phosphate. It catalyses the reaction 1D-myo-inositol 5-phosphate + H2O = myo-inositol + phosphate. It carries out the reaction 1D-myo-inositol 6-phosphate + H2O = myo-inositol + phosphate. The catalysed reaction is scyllo-inositol 1-phosphate + H2O = scyllo-inositol + phosphate. The enzyme catalyses alpha-D-galactose 1-phosphate + H2O = D-galactose + phosphate. It catalyses the reaction alpha-D-glucose 1-phosphate + H2O = D-glucose + phosphate. It carries out the reaction D-glucose 6-phosphate + H2O = D-glucose + phosphate. The catalysed reaction is beta-D-fructose 1-phosphate + H2O = D-fructose + phosphate. The enzyme catalyses glycerol 2-phosphate + H2O = glycerol + phosphate. It catalyses the reaction adenosine 2'-phosphate + H2O = adenosine + phosphate. The protein operates within polyol metabolism; myo-inositol biosynthesis; myo-inositol from D-glucose 6-phosphate: step 2/2. Its activity is regulated as follows. Inhibited by Li(+), Ca(2+) and Mn(2+), but also by Mg(2+) at concentrations above 3 mM. In terms of biological role, phosphatase involved in the dephosphorylation of myo-inositol monophosphate to generate myo-inositol. Is also able to dephosphorylate scyllo-inositol-phosphate, myo-inositol 1,4-diphosphate, scyllo-inositol-1,3-diphosphate and scyllo-inositol-1,4-diphosphate. Also dephosphorylates in vitro other sugar-phosphates including D-galactose-1-phosphate, glucose-1-phosphate, glucose-6-phosphate, fructose-1-phosphate, beta-glycerophosphate and 2'-AMP. Responsible for the provision of inositol required for synthesis of phosphatidylinositol and polyphosphoinositides, and involved in maintaining normal brain function. Has been implicated as the pharmacological target for lithium Li(+) action in brain. This is Inositol monophosphatase 1 (IMPA1) from Sus scrofa (Pig).